We begin with the raw amino-acid sequence, 159 residues long: Aspartate carbamoyltransferase regulatory chain (159 aa).

Cys-108, Cys-113, Cys-138, and Cys-141 together coordinate Zn(2+).

It belongs to the PyrI family. As to quaternary structure, contains catalytic and regulatory chains. Zn(2+) is required as a cofactor.

Involved in allosteric regulation of aspartate carbamoyltransferase. This Thermofilum pendens (strain DSM 2475 / Hrk 5) protein is Aspartate carbamoyltransferase regulatory chain.